Here is a 2023-residue protein sequence, read N- to C-terminus: Protein Daple (2023 aa).

In terms of domain architecture, Calponin-homology (CH) spans Asn11 to Ala131. Coiled coils occupy residues Arg250–Glu415, Asn458–Asn1064, and Leu1105–Phe1419. Residues Arg1013–Pro1035 are disordered. Positions Glu1022 to Ser1033 are enriched in polar residues. Disordered regions lie at residues Lys1441–Ser1824 and Leu1837–Val2023. Positions Pro1442–Ser1460 are enriched in basic and acidic residues. Residues Ser1478 to Gln1491 show a composition bias toward pro residues. Composition is skewed to polar residues over residues Asp1497 to Ala1518 and Thr1564 to Leu1585. 2 stretches are compositionally biased toward low complexity: residues Ser1623–Leu1643 and Arg1667–Ser1704. The GBA signature appears at Ser1700–Ser1728. Polar residues-rich tracts occupy residues Gln1714 to Gly1727, Thr1752 to Thr1763, Leu1785 to Pro1799, and Ala1809 to Ser1824. The span at Val1890–Phe1904 shows a compositional bias: basic and acidic residues. Positions Gly1927 to Gly1945 are enriched in low complexity. Over residues Gln1974–Asp1988 the composition is skewed to basic and acidic residues. Residues Thr1989 to Gln2014 are compositionally biased toward polar residues. The PDZ-binding motif lies at Tyr2020–Val2023.

This sequence belongs to the CCDC88 family.

The protein resides in the cytoplasm. Its subcellular location is the cell junction. Positive regulator of Wnt signaling, acting synergistically with dvl2. Functions upstream of ctnnb1/beta-catenin in the canonical Wnt pathway, and also activates jnk in the Wnt/planar cell polarity (PCP) pathway. Acts as a non-receptor guanine nucleotide exchange factor which binds to and activates guanine nucleotide-binding protein G(i) alpha (Gi-alpha) subunits. This promotes apical cell constriction and subsequent bending of the neural plate during neurulation via arhgef18. The sequence is that of Protein Daple from Danio rerio (Zebrafish).